The sequence spans 360 residues: MEAAQGRLGPEPELSVGAEHQAATFSGRPSRTPSKPPSVRTLSGEEEAESVGVSSRHPRASPKTWSGSIAHGPELDTWEDKPSSRATPSGARGRRGVPGSEHAPPPSSWYPEPEPSEDQPSALRVCRRGSPGGVEMNVELPQQEGDDDDDEDEEAAAGRAGRSFPSRLQDSRSLDGLSGACGGGGSSSSGETGAGGGRRATISSPLELEGTVSRHGDLTHFVANNLQLKIRLSGAPPPVPPASVRPCLTPAPTPTIPPIDPDVLRDLERLSRELGGRVDRLLRGLGGAVQELTALSVGCIQTYRDAVDSLGEAVDMSIKGMYTLLARCEELERALQPVQGLARQVRDIRRTLEVLEALCK.

The tract at residues methionine 1 to threonine 201 is disordered. Residues alanine 23–proline 33 are compositionally biased toward polar residues. Position 41 is a phosphothreonine (threonine 41). Phosphoserine is present on serine 130. Acidic residues predominate over residues glutamate 144–alanine 155. A Phosphoserine modification is found at serine 173. The segment covering glycine 179–arginine 198 has biased composition (gly residues). Phosphothreonine is present on threonine 201. Position 204 is a phosphoserine (serine 204).

This sequence belongs to the BORCS6 family. Component of the BLOC-one-related complex (BORC) which is composed of BLOC1S1, BLOC1S2, BORCS5, BORCS6, BORCS7, BORCS8, KXD1 and SNAPIN.

Its subcellular location is the lysosome membrane. In terms of biological role, as part of the BORC complex may play a role in lysosomes movement and localization at the cell periphery. Associated with the cytosolic face of lysosomes, the BORC complex may recruit ARL8B and couple lysosomes to microtubule plus-end-directed kinesin motor. In Mus musculus (Mouse), this protein is BLOC-1-related complex subunit 6.